An 85-amino-acid polypeptide reads, in one-letter code: uncharacterized protein (85 aa).

This is an uncharacterized protein from Bacillus subtilis (strain 168).